A 295-amino-acid chain; its full sequence is Voltage-gated potassium channel (295 aa).

At Met1 to Pro38 the chain is on the cytoplasmic side. A helical transmembrane segment spans residues Leu39–Leu63. The Extracellular segment spans residues Ser64–Tyr67. Residues Leu68 to Lys92 form a helical membrane-spanning segment. Residues Ser93–Pro96 lie on the Cytoplasmic side of the membrane. The helical intramembrane region spans Ala97–Tyr105. The Extracellular segment spans residues Glu106–Pro108. Residues Ala109–Gly125 form a helical; Voltage-sensor membrane-spanning segment. The Cytoplasmic portion of the chain corresponds to Leu126–Leu128. The chain crosses the membrane as a helical; Voltage-sensor span at residues Phe129–Ser145. Topologically, residues Arg146–Asp159 are cytoplasmic. A helical membrane pass occupies residues Lys160–Val184. Residues Glu185–Ser195 lie on the Extracellular side of the membrane. Residues Val196–Thr208 constitute an intramembrane region (pore-forming). The Selectivity filter signature appears at Thr209 to Asp214. At Thr209 to Ile221 the chain is on the extracellular side. The chain crosses the membrane as a helical span at residues Gly222 to Val253. Over Gly254–Lys295 the chain is Cytoplasmic.

This sequence belongs to the potassium channel family.

The protein resides in the cell membrane. Functionally, mediates a strong voltage-dependent potassium ion permeability of excitable membranes. Assuming opened or closed conformations in response to the voltage difference across the membrane, the protein forms a potassium-selective channel through which potassium ions may pass in accordance with their electrochemical gradient. This Aeropyrum pernix (strain ATCC 700893 / DSM 11879 / JCM 9820 / NBRC 100138 / K1) protein is Voltage-gated potassium channel.